A 227-amino-acid chain; its full sequence is Ureidoacrylate amidohydrolase RutB (227 aa).

Residue Asp-22 is the Proton acceptor of the active site. Lys-131 is a catalytic residue. Cys-164 functions as the Nucleophile in the catalytic mechanism.

This sequence belongs to the isochorismatase family. RutB subfamily.

The enzyme catalyses (Z)-3-ureidoacrylate + H2O + H(+) = (Z)-3-aminoacrylate + NH4(+) + CO2. The catalysed reaction is (Z)-3-ureidoacrylate + H2O = (Z)-3-aminoacrylate + carbamate + H(+). It carries out the reaction (Z)-2-methylureidoacrylate + H2O + H(+) = (Z)-2-methylaminoacrylate + NH4(+) + CO2. In terms of biological role, hydrolyzes ureidoacrylate to form aminoacrylate and carbamate. The carbamate hydrolyzes spontaneously, thereby releasing one of the nitrogen atoms of the pyrimidine ring as ammonia and one of its carbon atoms as CO2. This chain is Ureidoacrylate amidohydrolase RutB, found in Azorhizobium caulinodans (strain ATCC 43989 / DSM 5975 / JCM 20966 / LMG 6465 / NBRC 14845 / NCIMB 13405 / ORS 571).